The sequence spans 95 residues: Large ribosomal subunit protein uL23 (95 aa).

This sequence belongs to the universal ribosomal protein uL23 family. As to quaternary structure, part of the 50S ribosomal subunit. Contacts protein L29, and trigger factor when it is bound to the ribosome.

Functionally, one of the early assembly proteins it binds 23S rRNA. One of the proteins that surrounds the polypeptide exit tunnel on the outside of the ribosome. Forms the main docking site for trigger factor binding to the ribosome. This Desulforudis audaxviator (strain MP104C) protein is Large ribosomal subunit protein uL23.